The primary structure comprises 355 residues: Alkanal monooxygenase alpha chain (355 aa).

This sequence belongs to the bacterial luciferase oxidoreductase family. In terms of assembly, heterodimer of an alpha and a beta chain.

The enzyme catalyses a long-chain fatty aldehyde + FMNH2 + O2 = a long-chain fatty acid + hnu + FMN + H2O + 2 H(+). Functionally, light-emitting reaction in luminous bacteria. This Vibrio harveyi (Beneckea harveyi) protein is Alkanal monooxygenase alpha chain (luxA).